Reading from the N-terminus, the 677-residue chain is DNA ligase (677 aa).

Residues 35–39 (DAEFD), 85–86 (SL), and Glu110 contribute to the NAD(+) site. Lys112 (N6-AMP-lysine intermediate) is an active-site residue. Residues Arg133 and Glu173 each contribute to the NAD(+) site. The disordered stretch occupies residues 189-210 (QKEGGKPFANPRNAAAGSLRQK). NAD(+) is bound by residues Lys289 and Lys313. Residues Cys407, Cys410, Cys426, and Cys432 each coordinate Zn(2+). Positions 596–677 (IPDQVLEGLT…FKQLLANGTV (82 aa)) constitute a BRCT domain.

The protein belongs to the NAD-dependent DNA ligase family. LigA subfamily. Mg(2+) is required as a cofactor. Requires Mn(2+) as cofactor.

It carries out the reaction NAD(+) + (deoxyribonucleotide)n-3'-hydroxyl + 5'-phospho-(deoxyribonucleotide)m = (deoxyribonucleotide)n+m + AMP + beta-nicotinamide D-nucleotide.. DNA ligase that catalyzes the formation of phosphodiester linkages between 5'-phosphoryl and 3'-hydroxyl groups in double-stranded DNA using NAD as a coenzyme and as the energy source for the reaction. It is essential for DNA replication and repair of damaged DNA. The protein is DNA ligase of Corynebacterium diphtheriae (strain ATCC 700971 / NCTC 13129 / Biotype gravis).